The primary structure comprises 138 residues: Large ribosomal subunit protein uL16 (138 aa).

Basic residues predominate over residues 1-17 (MLIPRRVKHRKQHHPTR). The disordered stretch occupies residues 1 to 24 (MLIPRRVKHRKQHHPTRRGAASGG).

The protein belongs to the universal ribosomal protein uL16 family. As to quaternary structure, part of the 50S ribosomal subunit.

In terms of biological role, binds 23S rRNA and is also seen to make contacts with the A and possibly P site tRNAs. This chain is Large ribosomal subunit protein uL16, found in Kineococcus radiotolerans (strain ATCC BAA-149 / DSM 14245 / SRS30216).